Consider the following 288-residue polypeptide: Protoheme IX farnesyltransferase 2 (288 aa).

8 helical membrane-spanning segments follow: residues 16–36, 38–58, 88–108, 111–131, 139–159, 166–186, 227–247, and 266–286; these read IGVF…GAVP, FAPV…AGAF, LWPL…AFAA, WAAL…TVWL, IVIG…VAVP, LILA…LATA, AFFG…GWFL, and FFAS…EPLL.

Belongs to the UbiA prenyltransferase family. Protoheme IX farnesyltransferase subfamily.

The protein resides in the cell inner membrane. It carries out the reaction heme b + (2E,6E)-farnesyl diphosphate + H2O = Fe(II)-heme o + diphosphate. Its pathway is porphyrin-containing compound metabolism; heme O biosynthesis; heme O from protoheme: step 1/1. Converts heme B (protoheme IX) to heme O by substitution of the vinyl group on carbon 2 of heme B porphyrin ring with a hydroxyethyl farnesyl side group. The protein is Protoheme IX farnesyltransferase 2 of Paramagnetospirillum magneticum (strain ATCC 700264 / AMB-1) (Magnetospirillum magneticum).